The chain runs to 727 residues: MAFQKAVKGTILVGGGALATVLGLSQFAHYRRKQMNLAYVKAADYISEPVNREPPSREAQLLTLQNTSEFDILVIGGGATGSGCALDAVTRGLKTALVERDDFSSGTSSRSTKLIHGGVRYLQKAIMKLDIEQYRMVKEALHERANLLEIAPHLSAPLPIVLPVYKWWQLPYYWVGIKLYDLVAGSNCLKSSYVLSKSRALEHFPMLQKDKLVGAIVYYDGQHNDARMNLAIALTAARYGAATANYMEVVSLLKKTDPQTGKVRVSGARCKDVLTGQEFDVRAKCVINATGPFTDSVRKMDDKDAAAICQPSAGVHIVMPGYYSPESMGLLDPATSDGRVIFFLPWQKMTIAGTTDTPTDVTPHPIPSEEDINFILNEVRNYLSCDVEVRRGDVLAAWSGIRPLVTDPKSADTQSISRNHVVDISESGLITIAGGKWTTYRSMAEDTINAAIKTHNLKAGPSRTVGLFLQGGKDWSPTLYIRLVQDYGLESEVAQHLAATYGDKAFEVAKMASVTGKRWPIVGVRLVSEFPYIEAEVKYGIKEYACTAVDMISRRTRLAFLNVQAAEEALPRIVELMGRELNWDDHKKQEQLETAKKFLYYEMGYKSRSEQLTDRSEISLLPSDIDRYKKRFHKFDADKKGFITIVDVQRVLESINVQMDENTLHEILNEVDLNKNGQVELNEFLQLMSAIQKGRVSGSRLAILMKTAEENLDRRVPIPVDRSCGGL.

Residues 1 to 42 (MAFQKAVKGTILVGGGALATVLGLSQFAHYRRKQMNLAYVKA) constitute a mitochondrion transit peptide. 71 to 99 (DILVIGGGATGSGCALDAVTRGLKTALVE) serves as a coordination point for FAD. At Tyr-601 the chain carries Phosphotyrosine. EF-hand domains follow at residues 623 to 658 (SDID…INVQ) and 659 to 694 (MDEN…IQKG). Asp-672, Asn-674, Asn-676, Gln-678, and Glu-683 together coordinate Ca(2+).

Belongs to the FAD-dependent glycerol-3-phosphate dehydrogenase family. It depends on FAD as a cofactor.

The protein localises to the mitochondrion. The enzyme catalyses a quinone + sn-glycerol 3-phosphate = dihydroxyacetone phosphate + a quinol. The protein operates within polyol metabolism; glycerol degradation via glycerol kinase pathway; glycerone phosphate from sn-glycerol 3-phosphate (aerobic route): step 1/1. With respect to regulation, calcium-binding enhance the activity of the enzyme. Functionally, calcium-responsive mitochondrial glycerol-3-phosphate dehydrogenase which seems to be a key component of the pancreatic beta-cell glucose-sensing device. The sequence is that of Glycerol-3-phosphate dehydrogenase, mitochondrial (GPD2) from Macaca fascicularis (Crab-eating macaque).